Reading from the N-terminus, the 382-residue chain is S-adenosylmethionine synthase (382 aa).

Position 16 (His16) interacts with ATP. Asp18 provides a ligand contact to Mg(2+). Glu44 contacts K(+). Glu57 and Gln100 together coordinate L-methionine. A flexible loop region spans residues 100–110 (QSPDIAQGVDN). ATP-binding positions include 165 to 167 (DAK), 231 to 232 (RF), Asp240, 246 to 247 (RK), and Lys267. Asp240 is an L-methionine binding site. Lys271 contributes to the L-methionine binding site.

Belongs to the AdoMet synthase family. As to quaternary structure, homotetramer; dimer of dimers. Requires Mg(2+) as cofactor. K(+) is required as a cofactor.

The protein resides in the cytoplasm. It carries out the reaction L-methionine + ATP + H2O = S-adenosyl-L-methionine + phosphate + diphosphate. The protein operates within amino-acid biosynthesis; S-adenosyl-L-methionine biosynthesis; S-adenosyl-L-methionine from L-methionine: step 1/1. Catalyzes the formation of S-adenosylmethionine (AdoMet) from methionine and ATP. The overall synthetic reaction is composed of two sequential steps, AdoMet formation and the subsequent tripolyphosphate hydrolysis which occurs prior to release of AdoMet from the enzyme. This chain is S-adenosylmethionine synthase, found in Legionella pneumophila (strain Lens).